Reading from the N-terminus, the 264-residue chain is uncharacterized protein (264 aa).

The N-terminal stretch at 1-22 (MGYLKKLALFISVIILGIFIIG) is a signal peptide. Cys23 is lipidated: N-palmitoyl cysteine. Cys23 carries S-diacylglycerol cysteine lipidation.

Belongs to the staphylococcal tandem lipoprotein family.

It is found in the cell membrane. This is an uncharacterized protein from Staphylococcus aureus (strain N315).